Reading from the N-terminus, the 311-residue chain is Glycerol-3-phosphate dehydrogenase [NAD(P)+] (311 aa).

Residues Trp12, Arg31, Arg32, and Lys96 each contribute to the NADPH site. Sn-glycerol 3-phosphate-binding residues include Lys96, Gly124, and Ser126. Ala128 provides a ligand contact to NADPH. Residues Lys178, Asp231, Ser241, Arg242, and Asn243 each coordinate sn-glycerol 3-phosphate. Lys178 (proton acceptor) is an active-site residue. Arg242 contributes to the NADPH binding site. 2 residues coordinate NADPH: Val266 and Glu268.

This sequence belongs to the NAD-dependent glycerol-3-phosphate dehydrogenase family.

It is found in the cytoplasm. It carries out the reaction sn-glycerol 3-phosphate + NAD(+) = dihydroxyacetone phosphate + NADH + H(+). The catalysed reaction is sn-glycerol 3-phosphate + NADP(+) = dihydroxyacetone phosphate + NADPH + H(+). It participates in membrane lipid metabolism; glycerophospholipid metabolism. Its function is as follows. Catalyzes the reduction of the glycolytic intermediate dihydroxyacetone phosphate (DHAP) to sn-glycerol 3-phosphate (G3P), the key precursor for phospholipid synthesis. The chain is Glycerol-3-phosphate dehydrogenase [NAD(P)+] from Helicobacter hepaticus (strain ATCC 51449 / 3B1).